We begin with the raw amino-acid sequence, 127 residues long: Aspartate 1-decarboxylase (127 aa).

S25 acts as the Schiff-base intermediate with substrate; via pyruvic acid in catalysis. S25 is modified (pyruvic acid (Ser)). Position 57 (T57) interacts with substrate. Catalysis depends on Y58, which acts as the Proton donor. 73–75 (GAA) is a binding site for substrate.

It belongs to the PanD family. In terms of assembly, heterooctamer of four alpha and four beta subunits. Requires pyruvate as cofactor. In terms of processing, is synthesized initially as an inactive proenzyme, which is activated by self-cleavage at a specific serine bond to produce a beta-subunit with a hydroxyl group at its C-terminus and an alpha-subunit with a pyruvoyl group at its N-terminus.

The protein resides in the cytoplasm. It catalyses the reaction L-aspartate + H(+) = beta-alanine + CO2. It participates in cofactor biosynthesis; (R)-pantothenate biosynthesis; beta-alanine from L-aspartate: step 1/1. Its function is as follows. Catalyzes the pyruvoyl-dependent decarboxylation of aspartate to produce beta-alanine. The polypeptide is Aspartate 1-decarboxylase (Clostridium kluyveri (strain NBRC 12016)).